We begin with the raw amino-acid sequence, 74 residues long: ATP synthase subunit c (74 aa).

Helical transmembrane passes span 5–25 (LAYIGAGLAGMGTGIAALGVG) and 49–69 (LFIGIAFAEALGIFSFLVALL).

The protein belongs to the ATPase C chain family. As to quaternary structure, F-type ATPases have 2 components, F(1) - the catalytic core - and F(0) - the membrane proton channel. F(1) has five subunits: alpha(3), beta(3), gamma(1), delta(1), epsilon(1). F(0) has three main subunits: a(1), b(2) and c(10-14). The alpha and beta chains form an alternating ring which encloses part of the gamma chain. F(1) is attached to F(0) by a central stalk formed by the gamma and epsilon chains, while a peripheral stalk is formed by the delta and b chains.

The protein resides in the cell inner membrane. Functionally, f(1)F(0) ATP synthase produces ATP from ADP in the presence of a proton or sodium gradient. F-type ATPases consist of two structural domains, F(1) containing the extramembraneous catalytic core and F(0) containing the membrane proton channel, linked together by a central stalk and a peripheral stalk. During catalysis, ATP synthesis in the catalytic domain of F(1) is coupled via a rotary mechanism of the central stalk subunits to proton translocation. Its function is as follows. Key component of the F(0) channel; it plays a direct role in translocation across the membrane. A homomeric c-ring of between 10-14 subunits forms the central stalk rotor element with the F(1) delta and epsilon subunits. The chain is ATP synthase subunit c from Ruegeria sp. (strain TM1040) (Silicibacter sp.).